Reading from the N-terminus, the 259-residue chain is DNA repair protein RecO (259 aa).

It belongs to the RecO family.

Involved in DNA repair and RecF pathway recombination. This chain is DNA repair protein RecO, found in Rhizobium rhizogenes (strain K84 / ATCC BAA-868) (Agrobacterium radiobacter).